The primary structure comprises 130 residues: Fluoride-specific ion channel FluC (130 aa).

4 helical membrane passes run 3 to 23 (LVFL…YFVG), 38 to 58 (LGTF…GHLA), 67 to 87 (FGIF…SYGL), and 102 to 122 (ISYV…GWFL). Residues Gly-77 and Thr-80 each contribute to the Na(+) site.

This sequence belongs to the fluoride channel Fluc/FEX (TC 1.A.43) family.

The protein resides in the cell inner membrane. It carries out the reaction fluoride(in) = fluoride(out). Its activity is regulated as follows. Na(+) is not transported, but it plays an essential structural role and its presence is essential for fluoride channel function. In terms of biological role, fluoride-specific ion channel. Important for reducing fluoride concentration in the cell, thus reducing its toxicity. This chain is Fluoride-specific ion channel FluC, found in Helicobacter pylori (strain J99 / ATCC 700824) (Campylobacter pylori J99).